A 434-amino-acid chain; its full sequence is Trigger factor (434 aa).

The region spanning 161-246 (EDRATIDFSG…LKKVEERELP (86 aa)) is the PPIase FKBP-type domain.

It belongs to the FKBP-type PPIase family. Tig subfamily.

It localises to the cytoplasm. It catalyses the reaction [protein]-peptidylproline (omega=180) = [protein]-peptidylproline (omega=0). Its function is as follows. Involved in protein export. Acts as a chaperone by maintaining the newly synthesized protein in an open conformation. Functions as a peptidyl-prolyl cis-trans isomerase. The polypeptide is Trigger factor (Erwinia tasmaniensis (strain DSM 17950 / CFBP 7177 / CIP 109463 / NCPPB 4357 / Et1/99)).